The following is a 124-amino-acid chain: Mini zinc finger protein 4 (124 aa).

A ZF-HD dimerization-type; degenerate zinc finger spans residues 35–84 (YGECRRNHAARMGGHAVDGCREFLAEGEEGTGGALRCAACGCHRSFHRRV).

As to quaternary structure, homo- and heterodimers.

The protein resides in the cytoplasm. Inhibits zinc finger homeodomain (ZHD) transcription factors, by interacting with them to prevent both their nuclear localization and their DNA-binding properties. In Oryza sativa subsp. japonica (Rice), this protein is Mini zinc finger protein 4 (MIF4).